The primary structure comprises 513 residues: Maturase K (513 aa).

This sequence belongs to the intron maturase 2 family. MatK subfamily.

It localises to the plastid. Its subcellular location is the chloroplast. In terms of biological role, usually encoded in the trnK tRNA gene intron. Probably assists in splicing its own and other chloroplast group II introns. In Cyrilla racemiflora (Swamp titi), this protein is Maturase K.